The chain runs to 563 residues: Putative cytochrome c oxidase subunit 1-beta (563 aa).

7 helical membrane-spanning segments follow: residues 34-54, 76-96, 117-137, 164-184, 208-228, 252-272, and 284-304; these read IGHL…VMAL, LFTL…FAGF, MLSY…LAVP, MWIM…VNFL, LFTS…LLVL, LFWF…FGII, and IFGY…SVVV. Histidine 80 is a binding site for Fe(II)-heme a. The Cu cation site is built by histidine 258 and tyrosine 262. Residues 258 to 262 constitute a cross-link (1'-histidyl-3'-tyrosine (His-Tyr)); the sequence is HPEVY. 2 residues coordinate Cu cation: histidine 307 and histidine 308. The next 2 membrane-spanning stretches (helical) occupy residues 309 to 329 and 353 to 373; these read MFAT…LIAV and MLWA…GVIL. Histidine 391 provides a ligand contact to heme a3. The next 3 membrane-spanning stretches (helical) occupy residues 392–412, 427–447, and 470–490; these read FHYV…YFWW, IHFW…HWLG, and LSTI…YNVW. Residue histidine 393 coordinates Fe(II)-heme a. A disordered region spans residues 536–563; the sequence is AFDLHHPAHAGEAPQPEPKHEQADREPS. Residues 552–563 show a composition bias toward basic and acidic residues; sequence EPKHEQADREPS.

Belongs to the heme-copper respiratory oxidase family. As to quaternary structure, associates with subunits II, III and IV to form cytochrome c oxidase. Requires Cu(2+) as cofactor. The cofactor is heme.

It localises to the cell membrane. It catalyses the reaction 4 Fe(II)-[cytochrome c] + O2 + 8 H(+)(in) = 4 Fe(III)-[cytochrome c] + 2 H2O + 4 H(+)(out). Its pathway is energy metabolism; oxidative phosphorylation. Cytochrome c oxidase is the component of the respiratory chain that catalyzes the reduction of oxygen to water. Subunits 1-3 form the functional core of the enzyme complex. CO I is the catalytic subunit of the enzyme. Electrons originating in cytochrome c are transferred via the copper A center of subunit 2 and heme A of subunit 1 to the bimetallic center formed by heme A3 and copper B. This Streptomyces avermitilis (strain ATCC 31267 / DSM 46492 / JCM 5070 / NBRC 14893 / NCIMB 12804 / NRRL 8165 / MA-4680) protein is Putative cytochrome c oxidase subunit 1-beta (ctaD2).